We begin with the raw amino-acid sequence, 203 residues long: Abscisic acid receptor PYL5 (203 aa).

Positions 1-18 are enriched in polar residues; sequence MRSPVQLQHGSDATNGFH. The tract at residues 1–29 is disordered; it reads MRSPVQLQHGSDATNGFHTLQPHDQTDGP. Positions 51–201 are START-like; the sequence is HDVGPDQCCS…NLQSLARSTN (151 aa). Abscisate contacts are provided by residues lysine 87, 117 to 122, 144 to 150, and glutamate 166; these read AVSSTE and RLKNYRS. Positions 113–117 match the Gate loop motif; it reads SGLPA. The short motif at 143 to 145 is the Latch loop element; that stretch reads HRL.

Belongs to the PYR/PYL/RCAR abscisic acid intracellular receptor family. In terms of assembly, monomer. Homodimer. Binds ABA on one subunit only. Binds to CARs protein in an ABA-independent manner, both at the plasma membrane and in the nucleus. Binds both (-)-ABA and (+)-ABA. Interacts with HAB1, ABI1 and ABI2, and possibly with other PP2Cs.

It is found in the cytoplasm. The protein resides in the nucleus. Its subcellular location is the cell membrane. Receptor for abscisic acid (ABA) required for ABA-mediated responses such as stomatal closure and germination inhibition. Inhibits the activity of group-A protein phosphatases type 2C (PP2Cs) in an ABA-independent manner but more efficiently when activated by ABA. Confers enhanced sensitivity to ABA. Can be activated by both (-)-ABA and (+)-ABA. The protein is Abscisic acid receptor PYL5 (PYL5) of Arabidopsis thaliana (Mouse-ear cress).